Consider the following 752-residue polypeptide: Protein WEAK CHLOROPLAST MOVEMENT UNDER BLUE LIGHT-like 2 (752 aa).

Ser-143 carries the phosphoserine modification. Coiled-coil stretches lie at residues 186–557 and 596–651; these read ERRK…SRAS and ELSK…KEAM. The segment at 476-495 is disordered; the sequence is KHDLSETRQRNREDTREEKC. Positions 653–675 are enriched in basic and acidic residues; it reads KVEKARDGKVGMDHELRKWRSDN. A disordered region spans residues 653 to 733; it reads KVEKARDGKV…ETETKKKKKR (81 aa). A compositionally biased stretch (polar residues) spans 690–723; that stretch reads KSKSALHQPTTFTFGEQASSSNVTPQASSSNVTP.

The protein belongs to the WEB family.

This is Protein WEAK CHLOROPLAST MOVEMENT UNDER BLUE LIGHT-like 2 (WEL2) from Arabidopsis thaliana (Mouse-ear cress).